Here is a 71-residue protein sequence, read N- to C-terminus: Conotoxin Bu25 (71 aa).

Positions 1–21 (MGMRMMVTVFPLVVLATTVVS) are cleaved as a signal peptide. A propeptide spanning residues 22 to 44 (LRSNRASDGRRGIVNKLNDLVPK) is cleaved from the precursor. The residue at position 70 (arginine 70) is an Arginine amide.

It belongs to the conotoxin A superfamily. Contains 3 disulfide bonds. They are not indicated here, since framework IV presents two different connectivities (I-V, II-III, IV-VI and I-III, II-V, IV-VI). Expressed by the venom duct.

It is found in the secreted. This is Conotoxin Bu25 from Conus bullatus (Bubble cone).